The following is a 437-amino-acid chain: Methionine aminopeptidase 2 (437 aa).

Residues 1-90 form a disordered region; that stretch reads MAAQAAPAEE…LFPNNQYPKG (90 aa). Over residues 10–20 the composition is skewed to basic and acidic residues; the sequence is ELSKLSVDETK. Acidic residues predominate over residues 31 to 42; sequence SDAESGDEEAEE. The span at 52–66 shows a compositional bias: basic residues; sequence AKKKKKRKPKKKKKA. Histidine 190 is a substrate binding site. Positions 210, 221, and 290 each coordinate a divalent metal cation. Residue histidine 298 participates in substrate binding. Glutamate 323 and glutamate 418 together coordinate a divalent metal cation.

Belongs to the peptidase M24A family. Methionine aminopeptidase eukaryotic type 2 subfamily. Requires Co(2+) as cofactor. Zn(2+) is required as a cofactor. Mn(2+) serves as cofactor. The cofactor is Fe(2+).

The protein localises to the cytoplasm. It carries out the reaction Release of N-terminal amino acids, preferentially methionine, from peptides and arylamides.. In terms of biological role, cotranslationally removes the N-terminal methionine from nascent proteins. The N-terminal methionine is often cleaved when the second residue in the primary sequence is small and uncharged (Met-Ala-, Cys, Gly, Pro, Ser, Thr, or Val). The sequence is that of Methionine aminopeptidase 2 from Neurospora crassa (strain ATCC 24698 / 74-OR23-1A / CBS 708.71 / DSM 1257 / FGSC 987).